The sequence spans 350 residues: Cyclin-O (350 aa).

A disordered region spans residues methionine 1–proline 89. Residues proline 28–proline 42 are compositionally biased toward basic residues. Residue serine 81 is modified to Phosphoserine.

The protein belongs to the cyclin family. Present in respiratory cells (at protein level).

The protein resides in the cytoplasm. The protein localises to the nucleus. It is found in the nucleolus. Functionally, specifically required for generation of multiciliated cells, possibly by promoting a cell cycle state compatible with centriole amplification and maturation. Acts downstream of MCIDAS to promote mother centriole amplification and maturation in preparation for apical docking. The sequence is that of Cyclin-O from Homo sapiens (Human).